The chain runs to 597 residues: Elongation factor 4 (597 aa).

The tr-type G domain occupies 2 to 184 (DHIRNFSIIA…ALIAKVPPPK (183 aa)). Residues 14 to 19 (DHGKST) and 131 to 134 (NKID) contribute to the GTP site.

The protein belongs to the TRAFAC class translation factor GTPase superfamily. Classic translation factor GTPase family. LepA subfamily.

It is found in the cell inner membrane. The enzyme catalyses GTP + H2O = GDP + phosphate + H(+). Required for accurate and efficient protein synthesis under certain stress conditions. May act as a fidelity factor of the translation reaction, by catalyzing a one-codon backward translocation of tRNAs on improperly translocated ribosomes. Back-translocation proceeds from a post-translocation (POST) complex to a pre-translocation (PRE) complex, thus giving elongation factor G a second chance to translocate the tRNAs correctly. Binds to ribosomes in a GTP-dependent manner. In Paraburkholderia phymatum (strain DSM 17167 / CIP 108236 / LMG 21445 / STM815) (Burkholderia phymatum), this protein is Elongation factor 4.